Reading from the N-terminus, the 141-residue chain is Large ribosomal subunit protein uL22 (141 aa).

This sequence belongs to the universal ribosomal protein uL22 family. Part of the 50S ribosomal subunit.

This protein binds specifically to 23S rRNA; its binding is stimulated by other ribosomal proteins, e.g. L4, L17, and L20. It is important during the early stages of 50S assembly. It makes multiple contacts with different domains of the 23S rRNA in the assembled 50S subunit and ribosome. Functionally, the globular domain of the protein is located near the polypeptide exit tunnel on the outside of the subunit, while an extended beta-hairpin is found that lines the wall of the exit tunnel in the center of the 70S ribosome. The protein is Large ribosomal subunit protein uL22 of Frankia alni (strain DSM 45986 / CECT 9034 / ACN14a).